The following is a 164-amino-acid chain: Transcription elongation factor GreA (164 aa).

The protein belongs to the GreA/GreB family.

Its function is as follows. Necessary for efficient RNA polymerase transcription elongation past template-encoded arresting sites. The arresting sites in DNA have the property of trapping a certain fraction of elongating RNA polymerases that pass through, resulting in locked ternary complexes. Cleavage of the nascent transcript by cleavage factors such as GreA or GreB allows the resumption of elongation from the new 3'terminus. GreA releases sequences of 2 to 3 nucleotides. The protein is Transcription elongation factor GreA of Helicobacter acinonychis (strain Sheeba).